The chain runs to 388 residues: Histone H2A.Y (388 aa).

LRR repeat units lie at residues 54 to 75 (SLQM…PHVP), 76 to 96 (SLIR…QYLR), and 100 to 121 (HLQT…KRLG). The region spanning 134-172 (NPVVNTNNYRNLVFNLFPSLVILDTLDKNGIDQEKAALD) is the LRRCT domain. The disordered stretch occupies residues 256-279 (RKAPASRNGGVPSKAGKGKMNAFS).

It belongs to the histone H2A family. In terms of assembly, the nucleosome is a histone octamer containing two molecules each of H2A, H2B, H3 and H4 assembled in one H3-H4 heterotetramer and two H2A-H2B heterodimers. The octamer wraps approximately 147 bp of DNA.

It is found in the nucleus. It localises to the chromosome. Its function is as follows. Variant histone H2A which replaces conventional H2A in a subset of nucleosomes. Nucleosomes wrap and compact DNA into chromatin, limiting DNA accessibility to the cellular machineries which require DNA as a template. Histones thereby play a central role in transcription regulation, DNA repair, DNA replication and chromosomal stability. DNA accessibility is regulated via a complex set of post-translational modifications of histones, also called histone code, and nucleosome remodeling. The polypeptide is Histone H2A.Y (HTAY) (Tetrahymena thermophila (strain SB210)).